Consider the following 128-residue polypeptide: Glycine cleavage system H protein (128 aa).

One can recognise a Lipoyl-binding domain in the interval 22-104 (TVLVGITDYA…YGEGWIFRLK (83 aa)). Lysine 63 is subject to N6-lipoyllysine.

The protein belongs to the GcvH family. As to quaternary structure, the glycine cleavage system is composed of four proteins: P, T, L and H. (R)-lipoate serves as cofactor.

Its function is as follows. The glycine cleavage system catalyzes the degradation of glycine. The H protein shuttles the methylamine group of glycine from the P protein to the T protein. In Thermus thermophilus (strain ATCC BAA-163 / DSM 7039 / HB27), this protein is Glycine cleavage system H protein.